A 413-amino-acid polypeptide reads, in one-letter code: Patatin-like protein 3 (413 aa).

Positions 54–245 constitute a PNPLA domain; sequence LSVDGGARPE…ALGNPTAAAI (192 aa). Residues 58–61 carry the GGXR motif; it reads GGAR. The active-site Nucleophile is the serine 100. The disordered stretch occupies residues 384-413; it reads EHGRRKQHVPPAASGGGGGGLDCHVSKKQP.

Belongs to the patatin family.

Its function is as follows. Possesses non-specific lipolytic acyl hydrolase (LAH) activity. Hydrolyzes phospholipids as well as galactolipids. May play a role in disease resistance. In Oryza sativa subsp. indica (Rice), this protein is Patatin-like protein 3 (PLP3).